Reading from the N-terminus, the 508-residue chain is Pyruvate kinase, cytosolic isozyme (508 aa).

Arg-48 provides a ligand contact to substrate. 4 residues coordinate K(+): Asn-50, Ser-52, Asp-82, and Thr-83. 50-53 (NFSH) lines the ATP pocket. Residues Arg-89 and Lys-174 each contribute to the ATP site. Glu-240 lines the Mg(2+) pocket. Substrate-binding residues include Gly-263, Asp-264, and Thr-296. Asp-264 serves as a coordination point for Mg(2+).

This sequence belongs to the pyruvate kinase family. Homotetramer. It depends on Mg(2+) as a cofactor. The cofactor is K(+).

The protein localises to the cytoplasm. It carries out the reaction pyruvate + ATP = phosphoenolpyruvate + ADP + H(+). It participates in carbohydrate degradation; glycolysis; pyruvate from D-glyceraldehyde 3-phosphate: step 5/5. The polypeptide is Pyruvate kinase, cytosolic isozyme (Nicotiana tabacum (Common tobacco)).